A 37-amino-acid chain; its full sequence is Cytochrome b6-f complex subunit 5 (37 aa).

The helical transmembrane segment at 5–25 (LLSGIVLGLIPITLFGLLVAA) threads the bilayer.

The protein belongs to the PetG family. As to quaternary structure, the 4 large subunits of the cytochrome b6-f complex are cytochrome b6, subunit IV (17 kDa polypeptide, PetD), cytochrome f and the Rieske protein, while the 4 small subunits are PetG, PetL, PetM and PetN. The complex functions as a dimer.

The protein localises to the plastid. The protein resides in the chloroplast thylakoid membrane. In terms of biological role, component of the cytochrome b6-f complex, which mediates electron transfer between photosystem II (PSII) and photosystem I (PSI), cyclic electron flow around PSI, and state transitions. PetG is required for either the stability or assembly of the cytochrome b6-f complex. The chain is Cytochrome b6-f complex subunit 5 from Pyropia yezoensis (Susabi-nori).